A 125-amino-acid polypeptide reads, in one-letter code: Steroid Delta-isomerase (125 aa).

Tyr14 functions as the Proton donor in the catalytic mechanism. Asp38 functions as the Proton acceptor in the catalytic mechanism. Residue Asp99 participates in substrate binding.

Homodimer.

It catalyses the reaction a 3-oxo-Delta(5)-steroid = a 3-oxo-Delta(4)-steroid. This is Steroid Delta-isomerase (ksi) from Comamonas testosteroni (Pseudomonas testosteroni).